We begin with the raw amino-acid sequence, 284 residues long: Acetylglutamate kinase (284 aa).

Substrate is bound by residues 64 to 65 (GG), Arg86, and Asn181.

Belongs to the acetylglutamate kinase family. ArgB subfamily.

The protein resides in the cytoplasm. The catalysed reaction is N-acetyl-L-glutamate + ATP = N-acetyl-L-glutamyl 5-phosphate + ADP. It participates in amino-acid biosynthesis; L-arginine biosynthesis; N(2)-acetyl-L-ornithine from L-glutamate: step 2/4. Catalyzes the ATP-dependent phosphorylation of N-acetyl-L-glutamate. The polypeptide is Acetylglutamate kinase (Wolinella succinogenes (strain ATCC 29543 / DSM 1740 / CCUG 13145 / JCM 31913 / LMG 7466 / NCTC 11488 / FDC 602W) (Vibrio succinogenes)).